Here is a 1493-residue protein sequence, read N- to C-terminus: MVFKVFSFVAFMACSTVKVGSIVWVQDPEEAWIDGEVVEVNGEDIKVQCTSGKTVVAKGSNTYPKDMEVPPSGVDDMTTLAYLHEPGVLQNLKSRYYIDEIYTYTGNILIAVNPFKQLPNLYNDHMMAQYKGAALGELSPHPFAVADAAYRQMINEGISQSILVSGESGAGKTETAKMLMKYLAKMGGRAVSDRRTVEDQVLESNPVLEAFGNAKTVKNNNSSRFGKFVEIQFDQRGRISGAAIRTYLLERSRVCQVSDPERNYHCFYMLCAAPPEDKRKLKLNDPTEFRYLNQSHCIKLDGVDDSKEYTKTREAMGIVGINLEEQEAIFRVVAAILHLGNIEFAIGEEPDSSVPTDESKKYLKIAAELFMCDEQALEDSLCKRIMVTPEETISRCLDPNSAALSRDALAKFVYSRLFDWIVNKINNSIGQDPDSKDMIGVLDIYGFESFKTNSFEQFCINLTNEKLQQHFTQHVLKMEQEEYTKEEIEWSQITFPDNRYVLELIEKKRGGIIALLDEACMFPRSTHKTFSQKLYETLKDNKYFSKPKLSRTDFTICHYAGDVTYQTEQFLEKNKDYVVAEHQALLGASRCTFIAGLFPPLVEDANKQSKFSSIASQFKQQLASLIEGLNTTEPHYIRCVKPNNLLKPSIFENQNSLQQLRCGGVMETIRVCRAGYPTRKHFDEFLDRFGILDSATLDKSSDEKAACKKLLETVGLNGFQIGKTKVFLKAGQMAELDDRRTEVLGRAACIIQWKFRSYLTRQSFIMLRNAAINIQAVYRGQVARYRFENLRREAAALKIQRALRIHLDRKRSYIEAVVTVQSGLRGMAARVVLRRKTKATTVIQSHCRRLRAELHYKKLKKAAITTQSAWRARLARKELRKLKTDARDTVVLQAAKSMLAEKVEELTWRLDLEKRMRVDMEVSKAQENAKLQLALEEIQLQFEETKVSLLKEVEAAKKTAAIVPVVKEVPVVDTVLMEKLTSENEKLKSLVTSLELKIDETEKKFEETKKISEERLKKALDAENKIDNLKTAMHNLEEKLKEVKLENNFLKESVLTTPVKTASGRFLSTPLKNLQNGLFTSEESQLSGAEFTTPPRIQESGSDTKSRGSHIDPQHEDVDALINSVTKNVGFSQGKPVAAFTIYKCLLHWKSFEAERTNVFDRLVQMIGSAIKDEDNDANLAYWLSNTSTLLFMLQQSLKSGGTGATPLRQSPSLVRWMTKGFRSPAAEAIRPVDAKDPALHFKQQLEAYVEKILGIIWDNLKKELNTVLALCIQAPKTFKGNALISITTANYWQDIIEGLDALLSTLKESFVPPVLIQKIFSQAFSLINVQVCNSLVTRPDNCSFINGEYLKSGLEKLEKWCCETKEEYAGSSWDELKHTRQAVGFLLIHKKYNISYDEIANDLCPNLQIQQHFKLCTLYKDEIYNTKSVSQDVIASMTGVMTDSSDFLLKEDSSNIISLSIDDLCSSMQDKDFAQVKPAEELLENPSFIFLH.

The 50-residue stretch at Lys-18 to Met-67 folds into the Myosin N-terminal SH3-like domain. In terms of domain architecture, Myosin motor spans Ser-72 to Thr-741. ATP-binding positions include Gly-166–Thr-173 and Asn-219–Lys-227. Actin-binding regions lie at residues Leu-504–Leu-538, Asp-540–Val-563, Phe-598–Leu-622, and Leu-622–Asn-644. 6 consecutive IQ domains span residues Leu-744–Asn-773, Leu-767–Ala-796, Arg-792–Gln-821, Tyr-813–Val-842, Lys-836–Thr-865, and Leu-859–Asp-888. Residues Thr-889–Thr-1057 are a coiled coil. The disordered stretch occupies residues Gln-1085 to Gln-1114. The span at Ser-1102–Gln-1114 shows a compositional bias: basic and acidic residues. Positions Asp-1161–Asp-1444 constitute a Dilute domain.

This sequence belongs to the TRAFAC class myosin-kinesin ATPase superfamily. Myosin family. Plant myosin class XI subfamily. In terms of assembly, homodimer.

Its function is as follows. Myosin heavy chain that is required for the cell cycle-regulated transport of various organelles and proteins for their segregation. Functions by binding with its tail domain to receptor proteins on organelles and exerting force with its N-terminal motor domain against actin filaments, thereby transporting its cargo along polarized actin cables. This Arabidopsis thaliana (Mouse-ear cress) protein is Myosin-13 (XI-G).